We begin with the raw amino-acid sequence, 461 residues long: Porin AaxA (461 aa).

The N-terminal stretch at Met1 to Ala22 is a signal peptide.

Belongs to the OprB family.

It localises to the cell outer membrane. In terms of biological role, facilitates L-arginine uptake, as part of the AaxABC system. The arginine uptake by the bacterium in the macrophage may be a virulence factor against the host innate immune response. This chain is Porin AaxA (aaxA), found in Chlamydia trachomatis serovar L2 (strain ATCC VR-902B / DSM 19102 / 434/Bu).